The chain runs to 112 residues: MAAALARLGLRSVKQVRVQFCPFEKNVESTRTFLQAVSSEKVRSTNLNCSVIADVRHDGSEPCVDVLFGDGHRLIMRGAHLTAQEMLSAFASHIQARGAAASGDKPSASTGR.

The protein belongs to the mitochondrion-specific ribosomal protein mL53 family. Component of the mitochondrial ribosome large subunit (39S) which comprises a 16S rRNA and about 50 distinct proteins.

It localises to the mitochondrion. The chain is Large ribosomal subunit protein mL53 (MRPL53) from Bos taurus (Bovine).